A 309-amino-acid chain; its full sequence is Glutaminase (309 aa).

Substrate-binding residues include Ser-64, Asn-114, Glu-160, Asn-167, Tyr-191, Tyr-243, and Val-261.

The protein belongs to the glutaminase family. Homotetramer.

It carries out the reaction L-glutamine + H2O = L-glutamate + NH4(+). The sequence is that of Glutaminase from Rhizobium johnstonii (strain DSM 114642 / LMG 32736 / 3841) (Rhizobium leguminosarum bv. viciae).